Consider the following 255-residue polypeptide: Cyclic di-GMP phosphodiesterase PdeH (255 aa).

An EAL domain is found at 13 to 255; that stretch reads EASIESLQER…ETLNTAVLAL (243 aa).

The catalysed reaction is 3',3'-c-di-GMP + H2O = 5'-phosphoguanylyl(3'-&gt;5')guanosine + H(+). In terms of biological role, involved in the control of the switch from cell motility to adhesion via regulation of cellular levels of cyclic-di-GMP (c-di-GMP). Part of a signaling cascade that regulates curli biosynthesis. The cascade is composed of two c-di-GMP control modules, in which c-di-GMP controlled by the DgcE/PdeH pair (module I) regulates the activity of the DgcM/PdeR pair (module II), which in turn regulates activity of the transcription factor MlrA and expression of the master biofilm regulator csgD. Effect on flagella is controlled via the c-di-GMP-binding flagellar brake protein YcgR. This is Cyclic di-GMP phosphodiesterase PdeH from Escherichia coli (strain K12).